The primary structure comprises 860 residues: Leucine--tRNA ligase (860 aa).

The 'HIGH' region signature appears at 42 to 52 (PYPSGRLHMGH). A 'KMSKS' region motif is present at residues 619-623 (KMSKS). Lys622 is a binding site for ATP.

It belongs to the class-I aminoacyl-tRNA synthetase family.

The protein resides in the cytoplasm. The catalysed reaction is tRNA(Leu) + L-leucine + ATP = L-leucyl-tRNA(Leu) + AMP + diphosphate. This chain is Leucine--tRNA ligase, found in Escherichia coli O9:H4 (strain HS).